The chain runs to 545 residues: T-complex protein 1 subunit gamma (545 aa).

Residue methionine 1 is modified to N-acetylmethionine. Residues 1-24 form a disordered region; sequence MMGHRPVLVLSQNTKRESGRKVQS. At serine 11 the chain carries Phosphoserine. A Glycyl lysine isopeptide (Lys-Gly) (interchain with G-Cter in SUMO2) cross-link involves residue lysine 15. An ADP-binding site is contributed by glycine 42. An ATP-binding site is contributed by glycine 42. A Mg(2+)-binding site is contributed by aspartate 93. Glycine 94, threonine 95, threonine 96, serine 97, threonine 162, and lysine 163 together coordinate ADP. Glycine 94, threonine 95, and threonine 96 together coordinate ATP. Phosphoserine is present on serine 170. N6-acetyllysine is present on lysine 222. Serine 243 and serine 244 each carry phosphoserine. Residue tyrosine 247 is modified to Phosphotyrosine. Glycyl lysine isopeptide (Lys-Gly) (interchain with G-Cter in SUMO2) cross-links involve residues lysine 248 and lysine 249. Serine 252 is subject to Phosphoserine. A disulfide bridge connects residues cysteine 366 and cysteine 372. A Glycyl lysine isopeptide (Lys-Gly) (interchain with G-Cter in SUMO2) cross-link involves residue lysine 381. Glycine 411 lines the ADP pocket. Residue glycine 411 participates in ATP binding. 2 positions are modified to phosphothreonine: threonine 430 and threonine 459. The ADP site is built by glycine 482, glutamate 483, glutamate 497, and lysine 502. Glycine 482 serves as a coordination point for ATP. ATP is bound at residue glutamate 497. The disordered stretch occupies residues 526–545; sequence HKKKGDDQSRQGGAPDAGQE.

The protein belongs to the TCP-1 chaperonin family. As to quaternary structure, component of the chaperonin-containing T-complex (TRiC), a hexadecamer composed of two identical back-to-back stacked rings enclosing a protein folding chamber. Each ring is made up of eight different subunits: TCP1/CCT1, CCT2, CCT3, CCT4, CCT5, CCT6A/CCT6, CCT7, CCT8. Interacts with PACRG. Interacts with DNAAF4. Interacts with DLEC1.

The protein localises to the cytoplasm. The catalysed reaction is ATP + H2O = ADP + phosphate + H(+). In terms of biological role, component of the chaperonin-containing T-complex (TRiC), a molecular chaperone complex that assists the folding of actin, tubulin and other proteins upon ATP hydrolysis. The TRiC complex mediates the folding of WRAP53/TCAB1, thereby regulating telomere maintenance. As part of the TRiC complex may play a role in the assembly of BBSome, a complex involved in ciliogenesis regulating transports vesicles to the cilia. The protein is T-complex protein 1 subunit gamma (CCT3) of Pongo abelii (Sumatran orangutan).